A 357-amino-acid chain; its full sequence is Isopentenyl-diphosphate delta-isomerase (357 aa).

12 to 13 (RK) provides a ligand contact to substrate. Residues S70, 71-73 (SMT), S101, and N130 each bind FMN. Residue 101 to 103 (SMR) coordinates substrate. Q165 contacts substrate. Mg(2+) is bound at residue E166. FMN contacts are provided by residues K197 and 310–311 (AR).

The protein belongs to the IPP isomerase type 2 family. In terms of assembly, homooctamer. Dimer of tetramers. FMN serves as cofactor. The cofactor is NADPH. Mg(2+) is required as a cofactor.

Its subcellular location is the cytoplasm. It catalyses the reaction isopentenyl diphosphate = dimethylallyl diphosphate. In terms of biological role, involved in the biosynthesis of isoprenoids. Catalyzes the 1,3-allylic rearrangement of the homoallylic substrate isopentenyl (IPP) to its allylic isomer, dimethylallyl diphosphate (DMAPP). This chain is Isopentenyl-diphosphate delta-isomerase, found in Pelodictyon phaeoclathratiforme (strain DSM 5477 / BU-1).